A 157-amino-acid chain; its full sequence is C-type lectin 9a (157 aa).

Residues Met1–Ala23 form the signal peptide. Disulfide bonds link Cys27/Cys38, Cys55/Cys151, and Cys126/Cys143. Residues Tyr34–Lys152 form the C-type lectin domain.

Belongs to the snaclec family. As to quaternary structure, heteromultimer; disulfide-linked. In terms of tissue distribution, expressed by the venom gland.

It is found in the secreted. Interferes with one step of hemostasis (modulation of platelet aggregation, or coagulation cascade, for example). The polypeptide is C-type lectin 9a (Crotalus adamanteus (Eastern diamondback rattlesnake)).